Here is a 170-residue protein sequence, read N- to C-terminus: Crossover junction endodeoxyribonuclease RuvC (170 aa).

Catalysis depends on residues D11, E71, and D143. Mg(2+) is bound by residues D11, E71, and D143.

The protein belongs to the RuvC family. As to quaternary structure, homodimer which binds Holliday junction (HJ) DNA. The HJ becomes 2-fold symmetrical on binding to RuvC with unstacked arms; it has a different conformation from HJ DNA in complex with RuvA. In the full resolvosome a probable DNA-RuvA(4)-RuvB(12)-RuvC(2) complex forms which resolves the HJ. The cofactor is Mg(2+).

Its subcellular location is the cytoplasm. It carries out the reaction Endonucleolytic cleavage at a junction such as a reciprocal single-stranded crossover between two homologous DNA duplexes (Holliday junction).. The RuvA-RuvB-RuvC complex processes Holliday junction (HJ) DNA during genetic recombination and DNA repair. Endonuclease that resolves HJ intermediates. Cleaves cruciform DNA by making single-stranded nicks across the HJ at symmetrical positions within the homologous arms, yielding a 5'-phosphate and a 3'-hydroxyl group; requires a central core of homology in the junction. The consensus cleavage sequence is 5'-(A/T)TT(C/G)-3'. Cleavage occurs on the 3'-side of the TT dinucleotide at the point of strand exchange. HJ branch migration catalyzed by RuvA-RuvB allows RuvC to scan DNA until it finds its consensus sequence, where it cleaves and resolves the cruciform DNA. In Sinorhizobium fredii (strain NBRC 101917 / NGR234), this protein is Crossover junction endodeoxyribonuclease RuvC.